The sequence spans 180 residues: Large ribosomal subunit protein uL5 (180 aa).

Belongs to the universal ribosomal protein uL5 family. As to quaternary structure, part of the 50S ribosomal subunit; part of the 5S rRNA/L5/L18/L25 subcomplex. Contacts the 5S rRNA and the P site tRNA. Forms a bridge to the 30S subunit in the 70S ribosome.

This is one of the proteins that bind and probably mediate the attachment of the 5S RNA into the large ribosomal subunit, where it forms part of the central protuberance. In the 70S ribosome it contacts protein S13 of the 30S subunit (bridge B1b), connecting the 2 subunits; this bridge is implicated in subunit movement. Contacts the P site tRNA; the 5S rRNA and some of its associated proteins might help stabilize positioning of ribosome-bound tRNAs. The polypeptide is Large ribosomal subunit protein uL5 (Mesoplasma florum (strain ATCC 33453 / NBRC 100688 / NCTC 11704 / L1) (Acholeplasma florum)).